The chain runs to 562 residues: Arginine--tRNA ligase (562 aa).

Residues 129-139 carry the 'HIGH' region motif; it reads ANPTGPLHVGH.

This sequence belongs to the class-I aminoacyl-tRNA synthetase family. In terms of assembly, monomer.

The protein localises to the cytoplasm. The enzyme catalyses tRNA(Arg) + L-arginine + ATP = L-arginyl-tRNA(Arg) + AMP + diphosphate. The chain is Arginine--tRNA ligase from Xanthomonas oryzae pv. oryzae (strain KACC10331 / KXO85).